Reading from the N-terminus, the 806-residue chain is Leucine--tRNA ligase (806 aa).

The 'HIGH' region motif lies at 38–48 (PYPSGEIHMGH). Positions 572-576 (KMSKS) match the 'KMSKS' region motif. Lysine 575 contacts ATP.

The protein belongs to the class-I aminoacyl-tRNA synthetase family.

Its subcellular location is the cytoplasm. It carries out the reaction tRNA(Leu) + L-leucine + ATP = L-leucyl-tRNA(Leu) + AMP + diphosphate. This chain is Leucine--tRNA ligase, found in Helicobacter pylori (strain HPAG1).